The following is a 100-amino-acid chain: Small ribosomal subunit protein bS18c (100 aa).

The span at 1 to 19 (MDKSKRPFRKSKRSFRRRL) shows a compositional bias: basic residues. A disordered region spans residues 1 to 23 (MDKSKRPFRKSKRSFRRRLPPIG).

The protein belongs to the bacterial ribosomal protein bS18 family. Part of the 30S ribosomal subunit.

It localises to the plastid. The protein resides in the chloroplast. This chain is Small ribosomal subunit protein bS18c, found in Calycanthus floridus var. glaucus (Eastern sweetshrub).